A 361-amino-acid polypeptide reads, in one-letter code: 5-formaminoimidazole-4-carboxamide-1-(beta)-D-ribofuranosyl 5'-monophosphate synthetase (361 aa).

5-amino-1-(5-phospho-beta-D-ribosyl)imidazole-4-carboxamide-binding residues include His27 and Ser94. In terms of domain architecture, ATP-grasp spans 116-348 (RAILRWEAER…MGQRIAREIK (233 aa)). Residues 146 to 208 (PDDI…ANYC) and Glu230 each bind ATP. Asn258 is a binding site for 5-amino-1-(5-phospho-beta-D-ribosyl)imidazole-4-carboxamide. 2 residues coordinate Mg(2+): Gln297 and Glu310.

The protein belongs to the phosphohexose mutase family. It depends on Mg(2+) as a cofactor. Requires Mn(2+) as cofactor.

It catalyses the reaction 5-amino-1-(5-phospho-beta-D-ribosyl)imidazole-4-carboxamide + formate + ATP = 5-formamido-1-(5-phospho-D-ribosyl)imidazole-4-carboxamide + ADP + phosphate. The protein operates within purine metabolism; IMP biosynthesis via de novo pathway; 5-formamido-1-(5-phospho-D-ribosyl)imidazole-4-carboxamide from 5-amino-1-(5-phospho-D-ribosyl)imidazole-4-carboxamide (formate route): step 1/1. In terms of biological role, catalyzes the ATP- and formate-dependent formylation of 5-aminoimidazole-4-carboxamide-1-beta-d-ribofuranosyl 5'-monophosphate (AICAR) to 5-formaminoimidazole-4-carboxamide-1-beta-d-ribofuranosyl 5'-monophosphate (FAICAR) in the absence of folates. The sequence is that of 5-formaminoimidazole-4-carboxamide-1-(beta)-D-ribofuranosyl 5'-monophosphate synthetase from Methanococcus maripaludis (strain C7 / ATCC BAA-1331).